Here is a 139-residue protein sequence, read N- to C-terminus: Large ribosomal subunit protein mL42 (139 aa).

The N-terminal 32 residues, 1-32 (MAVAAVKWVMSKRTILKHLFPVQNGALYCVCH), are a transit peptide targeting the mitochondrion.

The protein belongs to the mitochondrion-specific ribosomal protein mL42 family. Component of the mitochondrial ribosome large subunit (39S) which comprises a 16S rRNA and about 50 distinct proteins. Component of the mitochondrial ribosome small subunit (28S) which comprises a 12S rRNA and about 30 distinct proteins.

Its subcellular location is the mitochondrion. In Pongo abelii (Sumatran orangutan), this protein is Large ribosomal subunit protein mL42 (MRPL42).